A 178-amino-acid chain; its full sequence is Adenine phosphoribosyltransferase (178 aa).

The protein belongs to the purine/pyrimidine phosphoribosyltransferase family. Homodimer.

The protein resides in the cytoplasm. The enzyme catalyses AMP + diphosphate = 5-phospho-alpha-D-ribose 1-diphosphate + adenine. It participates in purine metabolism; AMP biosynthesis via salvage pathway; AMP from adenine: step 1/1. Its function is as follows. Catalyzes a salvage reaction resulting in the formation of AMP, that is energically less costly than de novo synthesis. The chain is Adenine phosphoribosyltransferase from Bacteroides fragilis (strain YCH46).